A 168-amino-acid chain; its full sequence is Phosphopantetheine adenylyltransferase (168 aa).

Thr14 provides a ligand contact to substrate. ATP-binding positions include 14-15 (TF) and His22. Residues Lys46, Leu78, and Arg92 each coordinate substrate. Residues 93-95 (GLR), Glu103, and 128-134 (YSFISSS) contribute to the ATP site.

This sequence belongs to the bacterial CoaD family. As to quaternary structure, homohexamer. Mg(2+) serves as cofactor.

The protein resides in the cytoplasm. It carries out the reaction (R)-4'-phosphopantetheine + ATP + H(+) = 3'-dephospho-CoA + diphosphate. The protein operates within cofactor biosynthesis; coenzyme A biosynthesis; CoA from (R)-pantothenate: step 4/5. Its function is as follows. Reversibly transfers an adenylyl group from ATP to 4'-phosphopantetheine, yielding dephospho-CoA (dPCoA) and pyrophosphate. This Xanthomonas oryzae pv. oryzae (strain MAFF 311018) protein is Phosphopantetheine adenylyltransferase.